We begin with the raw amino-acid sequence, 149 residues long: Arginine repressor (149 aa).

This sequence belongs to the ArgR family.

Its subcellular location is the cytoplasm. It participates in amino-acid biosynthesis; L-arginine biosynthesis [regulation]. Regulates arginine biosynthesis genes. In Oceanobacillus iheyensis (strain DSM 14371 / CIP 107618 / JCM 11309 / KCTC 3954 / HTE831), this protein is Arginine repressor.